We begin with the raw amino-acid sequence, 126 residues long: Fatty acid-binding protein, liver (126 aa).

Residues 54–56, 99–101, and Arg121 each bind cholate; these read TPN and HEQ.

This sequence belongs to the calycin superfamily. Fatty-acid binding protein (FABP) family.

Its subcellular location is the cytoplasm. In terms of biological role, FABPs are thought to play a role in the intracellular transport of long-chain fatty acids and their acyl-CoA esters. In Anolis pulchellus (Common grass anole), this protein is Fatty acid-binding protein, liver.